The primary structure comprises 562 residues: Arginine--tRNA ligase (562 aa).

Positions 122 to 132 match the 'HIGH' region motif; that stretch reads PNIAKDMHVGH.

This sequence belongs to the class-I aminoacyl-tRNA synthetase family. Monomer.

Its subcellular location is the cytoplasm. It catalyses the reaction tRNA(Arg) + L-arginine + ATP = L-arginyl-tRNA(Arg) + AMP + diphosphate. The polypeptide is Arginine--tRNA ligase (Chlamydia abortus (strain DSM 27085 / S26/3) (Chlamydophila abortus)).